Reading from the N-terminus, the 600-residue chain is Elongation factor 4 (600 aa).

Residues 4–186 (DTIRNFSIIA…EIVKKIPPPE (183 aa)) form the tr-type G domain. Residues 16 to 21 (DHGKST) and 133 to 136 (NKID) each bind GTP.

Belongs to the TRAFAC class translation factor GTPase superfamily. Classic translation factor GTPase family. LepA subfamily.

It localises to the cell inner membrane. The catalysed reaction is GTP + H2O = GDP + phosphate + H(+). Its function is as follows. Required for accurate and efficient protein synthesis under certain stress conditions. May act as a fidelity factor of the translation reaction, by catalyzing a one-codon backward translocation of tRNAs on improperly translocated ribosomes. Back-translocation proceeds from a post-translocation (POST) complex to a pre-translocation (PRE) complex, thus giving elongation factor G a second chance to translocate the tRNAs correctly. Binds to ribosomes in a GTP-dependent manner. The polypeptide is Elongation factor 4 (Geobacter sulfurreducens (strain ATCC 51573 / DSM 12127 / PCA)).